The chain runs to 605 residues: Aspartate--tRNA(Asp/Asn) ligase (605 aa).

Glu183 serves as a coordination point for L-aspartate. An aspartate region spans residues 207 to 210 (QLYK). Arg229 contributes to the L-aspartate binding site. Residues 229-231 (RDE) and Gln238 contribute to the ATP site. His456 serves as a coordination point for L-aspartate. Glu490 is an ATP binding site. Arg497 is a binding site for L-aspartate. ATP is bound at residue 542–545 (GLDR).

This sequence belongs to the class-II aminoacyl-tRNA synthetase family. Type 1 subfamily. Homodimer.

Its subcellular location is the cytoplasm. The enzyme catalyses tRNA(Asx) + L-aspartate + ATP = L-aspartyl-tRNA(Asx) + AMP + diphosphate. Aspartyl-tRNA synthetase with relaxed tRNA specificity since it is able to aspartylate not only its cognate tRNA(Asp) but also tRNA(Asn). Reaction proceeds in two steps: L-aspartate is first activated by ATP to form Asp-AMP and then transferred to the acceptor end of tRNA(Asp/Asn). The sequence is that of Aspartate--tRNA(Asp/Asn) ligase from Heliobacterium modesticaldum (strain ATCC 51547 / Ice1).